Reading from the N-terminus, the 461-residue chain is SWM histone demethylase complex subunit phf1 (461 aa).

Residues 79-130 (PYGGMTMPASSSSGATSVPPEQDPSLSVSFNRLPKSASTKTKNGRIRSSRRE) form a disordered region. Positions 102–119 (PSLSVSFNRLPKSASTKT) are enriched in polar residues. The segment at 190 to 246 (VTLCSVCQRGHSPLSNRIVFCDGCNSPYHQLCHHPPIDDATVQDVDAEWFCMKCQYR) adopts a PHD-type zinc-finger fold.

As to quaternary structure, component of the SWM histone demethylase complex composed of at least lsd1, lsd2, phf1 and phf2.

The protein localises to the nucleus. Its function is as follows. Component of the SWM histone demethylase complex that specifically demethylates H3K9me2, a specific tag for epigenetic transcriptional activation, thereby acting as a corepressor. Has a role in regulating heterochromatin propagation and euchromatic transcription. The polypeptide is SWM histone demethylase complex subunit phf1 (phf1) (Schizosaccharomyces pombe (strain 972 / ATCC 24843) (Fission yeast)).